The following is a 148-amino-acid chain: Lysozyme C (148 aa).

An N-terminal signal peptide occupies residues 1–18 (MKALTILGLVLLSVTVQG). The region spanning 19–148 (KIFERCELAR…VSQYVKGCGV (130 aa)) is the C-type lysozyme domain. 4 cysteine pairs are disulfide-bonded: Cys24–Cys146, Cys48–Cys134, Cys83–Cys99, and Cys95–Cys113. Residues Glu53 and Asp71 contribute to the active site.

It belongs to the glycosyl hydrolase 22 family. In terms of assembly, monomer.

It is found in the secreted. It carries out the reaction Hydrolysis of (1-&gt;4)-beta-linkages between N-acetylmuramic acid and N-acetyl-D-glucosamine residues in a peptidoglycan and between N-acetyl-D-glucosamine residues in chitodextrins.. Its function is as follows. Lysozymes have primarily a bacteriolytic function; those in tissues and body fluids are associated with the monocyte-macrophage system and enhance the activity of immunoagents. Also plays a role in digestion in this species. This Semnopithecus entellus (Northern plains gray langur) protein is Lysozyme C (LYZ).